The chain runs to 340 residues: Heat-inducible transcription repressor HrcA (340 aa).

Belongs to the HrcA family.

Its function is as follows. Negative regulator of class I heat shock genes (grpE-dnaK-dnaJ and groELS operons). Prevents heat-shock induction of these operons. This Mycoplasma mycoides subsp. mycoides SC (strain CCUG 32753 / NCTC 10114 / PG1) protein is Heat-inducible transcription repressor HrcA.